Here is a 528-residue protein sequence, read N- to C-terminus: OLD nuclease (528 aa).

Positions 1-153 are ATPase domain N-terminus; that stretch reads MLKRLQVKNF…LAQHLPSIRG (153 aa). 31–35 lines the ATP pocket; that stretch reads GAGKT. Positions 154-245 are dimerization domain; that stretch reads SILGRLLQPV…RESDLTLPGD (92 aa). The ATPase domain C-terminus stretch occupies residues 246 to 369; sequence ELGLGIQSAI…FDTARNEVLF (124 aa). The toprim domain stretch occupies residues 370–528; that stretch reads AKRALLVEGY…IRQVTRPMEE (159 aa). Residues glutamate 377, aspartate 381, aspartate 431, and aspartate 433 each coordinate a divalent metal cation. Positions 440 to 461 are disordered; it reads RADEETRRKQEQENKAEQEKNQ. A divalent metal cation is bound by residues serine 478 and glutamate 480. Arginine 487 serves as the catalytic Stabilizes transition state or protonates leaving group.

The protein belongs to the class 1 OLD nuclease family. As to quaternary structure, homodimer. Mg(2+) serves as cofactor. The cofactor is Mn(2+). Ca(2+) is required as a cofactor.

The enzyme catalyses Exonucleolytic cleavage in the 5'- to 3'-direction to yield nucleoside 5'-phosphates.. An exodeoxyribonuclease that degrades linear or supercoiled dsDNA from 5'-3'. Nicks and linearizes circular DNA. Activity is not stimulated by ATP or AMP-PNP, although it has DNA-stimulated ATPase activity. This chain is OLD nuclease, found in Thermus scotoductus (strain ATCC 700910 / SA-01).